Consider the following 229-residue polypeptide: Large ribosomal subunit protein uL1 (229 aa).

The protein belongs to the universal ribosomal protein uL1 family. In terms of assembly, part of the 50S ribosomal subunit.

Binds directly to 23S rRNA. The L1 stalk is quite mobile in the ribosome, and is involved in E site tRNA release. Its function is as follows. Protein L1 is also a translational repressor protein, it controls the translation of the L11 operon by binding to its mRNA. This Rhodopseudomonas palustris (strain TIE-1) protein is Large ribosomal subunit protein uL1.